Consider the following 667-residue polypeptide: DNA ligase (667 aa).

Residues 30-34, 79-80, and Glu112 contribute to the NAD(+) site; these read DSEYD and SL. Lys114 functions as the N6-AMP-lysine intermediate in the catalytic mechanism. The NAD(+) site is built by Arg135, Glu172, Lys289, and Lys313. Residues Cys407, Cys410, Cys425, and Cys431 each contribute to the Zn(2+) site. The 78-residue stretch at 590-667 folds into the BRCT domain; that stretch reads VRDNPLKGKT…SENEFLALLA (78 aa).

It belongs to the NAD-dependent DNA ligase family. LigA subfamily. The cofactor is Mg(2+). Mn(2+) serves as cofactor.

It carries out the reaction NAD(+) + (deoxyribonucleotide)n-3'-hydroxyl + 5'-phospho-(deoxyribonucleotide)m = (deoxyribonucleotide)n+m + AMP + beta-nicotinamide D-nucleotide.. DNA ligase that catalyzes the formation of phosphodiester linkages between 5'-phosphoryl and 3'-hydroxyl groups in double-stranded DNA using NAD as a coenzyme and as the energy source for the reaction. It is essential for DNA replication and repair of damaged DNA. This chain is DNA ligase, found in Histophilus somni (strain 2336) (Haemophilus somnus).